Consider the following 137-residue polypeptide: Large ribosomal subunit protein uL16 (137 aa).

Belongs to the universal ribosomal protein uL16 family. As to quaternary structure, part of the 50S ribosomal subunit.

Binds 23S rRNA and is also seen to make contacts with the A and possibly P site tRNAs. This Mesoplasma florum (strain ATCC 33453 / NBRC 100688 / NCTC 11704 / L1) (Acholeplasma florum) protein is Large ribosomal subunit protein uL16.